The sequence spans 589 residues: Putative phospholipase B-like 2 (589 aa).

A signal peptide spans 1 to 41 (MVGQMYCYPGSHLARALTRALALALVLALLVGPFLSGLAGA). Residues N88 and N110 are each glycosylated (N-linked (GlcNAc...) asparagine). The cysteines at positions 142 and 152 are disulfide-linked. N-linked (GlcNAc...) asparagine glycosylation is found at N231, N436, and N465. Cysteines 492 and 495 form a disulfide. N-linked (GlcNAc...) asparagine glycosylation is present at N515.

Belongs to the phospholipase B-like family. As to quaternary structure, interacts with IGF2R. Post-translationally, the p76 protein is synthesized as a 80 kDa precursor which is then processed into a N-terminal 32 kDa form and a C-terminal 45 kDa form. Glycosylated; contains mannose 6-phosphate sugars. As to expression, ubiquitously expressed, with highest levels in heart, brain and liver.

The protein localises to the lysosome lumen. Functionally, putative phospholipase. This chain is Putative phospholipase B-like 2 (PLBD2), found in Homo sapiens (Human).